Reading from the N-terminus, the 224-residue chain is UPF0758 protein AFE_0358 (224 aa).

Residues 102–224 (GLDSPLRVRQ…PLSLREQGGW (123 aa)) enclose the MPN domain. Zn(2+)-binding residues include His173, His175, and Asp186. Positions 173–186 (HNHPSGVAEPSAAD) match the JAMM motif motif.

Belongs to the UPF0758 family.

This is UPF0758 protein AFE_0358 from Acidithiobacillus ferrooxidans (strain ATCC 23270 / DSM 14882 / CIP 104768 / NCIMB 8455) (Ferrobacillus ferrooxidans (strain ATCC 23270)).